The sequence spans 596 residues: MSPEALSELIFNIANTLVSEGKAGTLTADLIPPQAKFAVMRPKDRAHGDWASNAAMQLAKKAGMKPRDLAELFAAELTNADGIKSVEVAGPGFINITLDSASAAAVVDTVLEAGSDYGKNDHLSGKTLNLEFVSANPTGPIHIGGTRWAAVGDSMARVLEANGAKVVREYYFNDHGEQINRFAKSLVAAAHGEETPIDGYKGAYIDEIAKRVIDEANADGVDVLSLPRVDGGADQDGNPLGEGDSEQREEFRKRAVPMMFDEIQRSMKNFRVNFDVWFHENSLYSDGEVDQAIADLRARGDIFEKDGATWFESTKHGDDKDRVIIKSDGNYAYFAADIAYYRNKRHRETNPADVAIYMLGADHHGYIGRMMAMCEAFGDKPGENMQILIGQLVNVMKDGKAVRMSKRAGNVVTIDDLTDAIGVDASRYSLARTDYNSPVDIDLNLLSSHSNENPVYYVQYAHARSCNVDRNAAAAGITYEGADVSLLDTTADGEVLAALAQWPALLREAGDLRAPHRVAHYLEDLAATYHKWYNVERVVPMELTDPEARGEQADAIRIAKAPEPARAAARLKLNDAVKTVIAEGLDLLGVTAPDKM.

The short motif at 135–145 is the 'HIGH' region element; sequence ANPTGPIHIGG. Residues 227 to 249 form a disordered region; the sequence is PRVDGGADQDGNPLGEGDSEQRE.

It belongs to the class-I aminoacyl-tRNA synthetase family. In terms of assembly, monomer.

Its subcellular location is the cytoplasm. It carries out the reaction tRNA(Arg) + L-arginine + ATP = L-arginyl-tRNA(Arg) + AMP + diphosphate. This is Arginine--tRNA ligase from Bifidobacterium adolescentis (strain ATCC 15703 / DSM 20083 / NCTC 11814 / E194a).